The chain runs to 918 residues: Interleukin-6 receptor subunit beta (918 aa).

The first 22 residues, 1 to 22 (MSALRIWLMQALLIFLTTESIG), serve as a signal peptide directing secretion. Over 23–618 (QLVEPCGYIY…TLKFAQGEIE (596 aa)) the chain is Extracellular. The region spanning 26–120 (EPCGYIYPEF…IEQNVYGITI (95 aa)) is the Ig-like C2-type domain. Intrachain disulfides connect Cys28–Cys54 and Cys48–Cys103. N-linked (GlcNAc...) asparagine glycosylation is found at Asn43, Asn61, Asn83, and Asn131. Fibronectin type-III domains follow at residues 125–215 (PPDI…NFDP), 223–323 (PPHN…TYED), 328–418 (APSF…IPGS), 422–516 (ASHP…LKQA), and 518–612 (PSKG…TLKF). Cys134 and Cys144 are oxidised to a cystine. Asn157 is a glycosylation site (N-linked (GlcNAc...) asparagine). Cysteines 172 and 181 form a disulfide. N-linked (GlcNAc...) asparagine glycosylation is found at Asn205 and Asn226. The short motif at 309–313 (WSDWS) is the WSXWS motif element. 2 N-linked (GlcNAc...) asparagine glycosylation sites follow: Asn382 and Asn389. Cys457 and Cys465 are disulfide-bonded. N-linked (GlcNAc...) asparagine glycosylation is found at Asn477 and Asn552. A helical membrane pass occupies residues 619–640 (AIVVPVCLAFLLTTLLGVLFCF). Topologically, residues 641–918 (NKRDLIKKHI…TVRQGGYMPQ (278 aa)) are cytoplasmic. A Box 1 motif motif is present at residues 650 to 658 (IWPNVPDPS). Disordered regions lie at residues 659-679 (KSHI…NSKD), 720-754 (TEGH…STAS), 773-795 (VQVF…PEDL), and 817-842 (SCSQ…GSEE). A phosphoserine mark is found at Ser660 and Ser666. Over residues 730 to 751 (SSCMSSSRPSISSSEENESAQS) the composition is skewed to low complexity. The span at 773-785 (VQVFSRSESTQPL) shows a compositional bias: polar residues. Phosphoserine occurs at positions 781, 788, 828, and 838.

It belongs to the type I cytokine receptor family. Type 2 subfamily. As to quaternary structure, component of a hexamer of two molecules each of IL6, IL6R and IL6ST; associates with the complex IL6:IL6R but does not interact with IL6. Forms heterodimers composed of LIFR and IL6ST (type I OSM receptor) which are activated by LIF and OSM. Also forms heterodimers composed of OSMR and IL6ST (type II receptor) which are activated by OSM but not by LIF. Interacts with HCK. Interacts with INPP5D/SHIP1. Interacts with SRC and YES. Interacts with ARMH4; this interaction prevents IL6ST protein homodimerization and bridges ARMH4 with IL6R and STAT3 and therefore inhibits phosphorylation of STAT3 at 'Tyr-705'. Post-translationally, phosphorylation of Ser-781 down-regulates cell surface expression. In terms of processing, heavily N-glycosylated. Glycosylation is required for protein stability and localization in plasma membrane but not for ligand binding. Found in hepatocytes, astrocytes, fibroblasts and endothelial cells.

Its subcellular location is the cell membrane. In terms of biological role, signal-transducing molecule. The receptor systems for IL6, LIF, OSM, CNTF, IL11, CTF1 and BSF3 can utilize IL6ST for initiating signal transmission. Binding of IL6 to IL6R induces IL6ST homodimerization and formation of a high-affinity receptor complex, which activates the intracellular JAK-MAPK and JAK-STAT3 signaling pathways. That causes phosphorylation of IL6ST tyrosine residues which in turn activates STAT3. In parallel, the IL6 signaling pathway induces the expression of two cytokine receptor signaling inhibitors, SOCS1 and SOCS3, which inhibit JAK and terminate the activity of the IL6 signaling pathway as a negative feedback loop. Also activates the yes-associated protein 1 (YAP) and NOTCH pathways to control inflammation-induced epithelial regeneration, independently of STAT3. Mediates signals which regulate immune response, hematopoiesis, pain control and bone metabolism. Has a role in embryonic development. Essential for survival of motor and sensory neurons and for differentiation of astrocytes. Required for expression of TRPA1 in nociceptive neurons. Required for the maintenance of PTH1R expression in the osteoblast lineage and for the stimulation of PTH-induced osteoblast differentiation. Required for normal trabecular bone mass and cortical bone composition. This chain is Interleukin-6 receptor subunit beta, found in Rattus norvegicus (Rat).